A 510-amino-acid polypeptide reads, in one-letter code: Olfactomedin-4 (510 aa).

The signal sequence occupies residues 1-20 (MRPGLSFLLALLFFLGQAAG). N-linked (GlcNAc...) asparagine glycans are attached at residues N72 and N136. Residues 155-234 (DFELIKVEVK…ECEASKDQNT (80 aa)) adopt a coiled-coil conformation. An Olfactomedin-like domain is found at 245–507 (SCGHGGVVNI…LLNYDLSVLQ (263 aa)). A disulfide bond links C246 and C437. N253 carries N-linked (GlcNAc...) asparagine glycosylation.

As to quaternary structure, homomultimer; disulfide-linked. Interacts with NDUFA13. Interacts with cell surface lectins (locutions ricinus communis agglutinin I, concanavalin-A and wheat germ agglutinin) and cadherin. N-glycosylated. In terms of tissue distribution, expressed during myeloid lineage development. Much higher expression in bone marrow neutrophils than in peripheral blood neutrophils (at protein level). Strongly expressed in the prostate, small intestine and colon and moderately expressed in the bone marrow and stomach. Overexpressed in some pancreatic cancer tissues.

The protein localises to the secreted. It is found in the extracellular space. The protein resides in the mitochondrion. Functionally, may promote proliferation of pancreatic cancer cells by favoring the transition from the S to G2/M phase. In myeloid leukemic cell lines, inhibits cell growth and induces cell differentiation and apoptosis. May play a role in the inhibition of EIF4EBP1 phosphorylation/deactivation. Facilitates cell adhesion, most probably through interaction with cell surface lectins and cadherin. The sequence is that of Olfactomedin-4 (OLFM4) from Homo sapiens (Human).